We begin with the raw amino-acid sequence, 433 residues long: Histone deacetylase RPD3 (433 aa).

The tract at residues 19-331 (RRVAYFYDAD…WCFETGLLNN (313 aa)) is histone deacetylase. His151 is an active-site residue. The ESA1-RPD3 motif motif lies at 320 to 340 (RTWCFETGLLNNVVLDKDLPY). Residues 388–433 (SVQLNHTPRDAEDLGDVEEDSAEAKDTKGGSQYARDLHVEHDNEFY) form a disordered region. Thr394 is subject to Phosphothreonine. Ser408 carries the phosphoserine modification. A compositionally biased stretch (basic and acidic residues) spans 422–433 (RDLHVEHDNEFY).

Belongs to the histone deacetylase family. HD type 1 subfamily. In terms of assembly, component of the RPD3C(L) complex composed of at least ASH1, CTI6, DEP1, PHO23, RPD3, RXT2, RXT3, SAP30, SDS3, SIN3, UME1 and UME6. Component of the RPD3C(S) complex composed of at least EAF3, RCO1, RPD3, SIN3, and UME1. Interacts with cyclophilins CPR1, CPR6 and CPR7, with the kinase HOG1, and with ESS1, CYC8 and HAC1.

The protein resides in the cytoplasm. Its subcellular location is the nucleus. It carries out the reaction N(6)-acetyl-L-lysyl-[histone] + H2O = L-lysyl-[histone] + acetate. Its function is as follows. Catalytic component of the RPD3 histone deacetylase (HDAC) complexes RPD3C(L) and RPD3C(S) responsible for the deacetylation of lysine residues on the N-terminal part of the core histones (H2A, H2B, H3 and H4). Histone deacetylation plays an important role in transcriptional regulation, cell cycle progression, DNA damage response, osmotic stress response and developmental events. Is involved in rDNA and telomere silencing and in double strand breaks repair. Required for both full transcription repression and activation of many genes including cell type-specific genes (STE6, TY2 and HO), cell differentiation-specific genes (SPO13), genes that respond to external signals (PHO5) and TRK2. The RPD3 complexes regulate also chromosomal replication timing. The protein is Histone deacetylase RPD3 (RPD3) of Saccharomyces cerevisiae (strain ATCC 204508 / S288c) (Baker's yeast).